The chain runs to 191 residues: Protein RER1A (191 aa).

Methionine 1 bears the N-acetylmethionine mark. The next 4 membrane-spanning stretches (helical) occupy residues 39 to 57, 60 to 80, 115 to 135, and 136 to 156; these read YRWIGTLVVALIYCLRVYY, GFYIIAYGLGIYLLNLLIGFL, FKFWYSMTKAFCIAFLMTFFS, and VFDVPVFWPILLCYWIVLFVL.

Belongs to the RER1 family.

The protein resides in the membrane. Its function is as follows. Involved in the retrieval of endoplasmic reticulum membrane proteins from the early Golgi compartment. The sequence is that of Protein RER1A (RER1A) from Arabidopsis thaliana (Mouse-ear cress).